The sequence spans 55 residues: Large ribosomal subunit protein bL33 (55 aa).

It belongs to the bacterial ribosomal protein bL33 family.

The sequence is that of Large ribosomal subunit protein bL33 from Escherichia coli (strain K12 / DH10B).